The following is a 692-amino-acid chain: Elongation factor G (692 aa).

In terms of domain architecture, tr-type G spans 8 to 282 (AKTRNIGIMA…AVIAYLPSPL (275 aa)). GTP is bound by residues 17–24 (AHVDAGKT), 81–85 (DTPGH), and 135–138 (NKMD).

The protein belongs to the TRAFAC class translation factor GTPase superfamily. Classic translation factor GTPase family. EF-G/EF-2 subfamily.

The protein resides in the cytoplasm. Catalyzes the GTP-dependent ribosomal translocation step during translation elongation. During this step, the ribosome changes from the pre-translocational (PRE) to the post-translocational (POST) state as the newly formed A-site-bound peptidyl-tRNA and P-site-bound deacylated tRNA move to the P and E sites, respectively. Catalyzes the coordinated movement of the two tRNA molecules, the mRNA and conformational changes in the ribosome. The protein is Elongation factor G (fus) of Streptococcus pyogenes serotype M1.